Reading from the N-terminus, the 284-residue chain is Nucleotide-binding protein Sputcn32_0712 (284 aa).

Residue 8–15 (GRSGSGKS) participates in ATP binding. 56 to 59 (DVRN) provides a ligand contact to GTP.

Belongs to the RapZ-like family.

Displays ATPase and GTPase activities. The protein is Nucleotide-binding protein Sputcn32_0712 of Shewanella putrefaciens (strain CN-32 / ATCC BAA-453).